Here is a 425-residue protein sequence, read N- to C-terminus: Threonine synthase (425 aa).

Lys105 carries the N6-(pyridoxal phosphate)lysine modification.

The protein belongs to the threonine synthase family. Requires pyridoxal 5'-phosphate as cofactor.

It catalyses the reaction O-phospho-L-homoserine + H2O = L-threonine + phosphate. It functions in the pathway amino-acid biosynthesis; L-threonine biosynthesis; L-threonine from L-aspartate: step 5/5. In terms of biological role, catalyzes the gamma-elimination of phosphate from L-phosphohomoserine and the beta-addition of water to produce L-threonine. This chain is Threonine synthase (thrC), found in Haemophilus influenzae (strain ATCC 51907 / DSM 11121 / KW20 / Rd).